The chain runs to 353 residues: tRNA-specific 2-thiouridylase MnmA 2 (353 aa).

ATP is bound at residue 6 to 13 (LLSGGVDS). The tract at residues 92–94 (NPD) is interaction with target base in tRNA. C97 functions as the Nucleophile in the catalytic mechanism. C97 and C192 are joined by a disulfide. G120 serves as a coordination point for ATP. The segment at 142 to 144 (KDQ) is interaction with tRNA. C192 acts as the Cysteine persulfide intermediate in catalysis.

This sequence belongs to the MnmA/TRMU family.

The protein resides in the cytoplasm. The enzyme catalyses S-sulfanyl-L-cysteinyl-[protein] + uridine(34) in tRNA + AH2 + ATP = 2-thiouridine(34) in tRNA + L-cysteinyl-[protein] + A + AMP + diphosphate + H(+). Functionally, catalyzes the 2-thiolation of uridine at the wobble position (U34) of tRNA, leading to the formation of s(2)U34. The chain is tRNA-specific 2-thiouridylase MnmA 2 from Bacteroides fragilis (strain YCH46).